A 350-amino-acid polypeptide reads, in one-letter code: Ion-translocating oxidoreductase complex subunit D (350 aa).

The next 4 membrane-spanning stretches (helical) occupy residues 20-40 (IMLLVLLAAVPGIVVQTWFFG), 42-62 (GTVLQIVLAALTAWATEAAIL), 89-109 (IPPLAPWWMVVLGTAFAVVIA), and 123-143 (PAMIGYVVLLISFPVQMTSWL). An FMN phosphoryl threonine modification is found at T187. A run of 5 helical transmembrane segments spans residues 214–234 (VLAGLGWQWVNIAWLAGGLFL), 242–262 (WHIPVSFLLSLGLCATLGWLF), 267–287 (LASPQMHLFSGATMLGAFFIL), 301–321 (LIFGALAGLLVWLIRSFGGYP), and 322–342 (DGVAFAVLLANITVPLIDYYT).

Belongs to the NqrB/RnfD family. In terms of assembly, the complex is composed of six subunits: RnfA, RnfB, RnfC, RnfD, RnfE and RnfG. It depends on FMN as a cofactor.

Its subcellular location is the cell inner membrane. Part of a membrane-bound complex that couples electron transfer with translocation of ions across the membrane. This is Ion-translocating oxidoreductase complex subunit D from Klebsiella pneumoniae (strain 342).